A 366-amino-acid chain; its full sequence is Variable large protein 10 (366 aa).

The first 18 residues, 1–18, serve as a signal peptide directing secretion; it reads MRKRISAIIMTLFMVLAS. A lipid anchor (N-palmitoyl cysteine) is attached at Cys19. Cys19 carries S-diacylglycerol cysteine lipidation.

It belongs to the variable large protein (Vlp) family. Beta subfamily.

Its subcellular location is the cell outer membrane. Functionally, the Vlp and Vsp proteins are antigenically distinct proteins, only one vlp or vsp gene is transcriptionally active at any one time. Switching between these genes is a mechanism of host immune response evasion. The polypeptide is Variable large protein 10 (Borrelia hermsii).